The chain runs to 252 residues: Small ribosomal subunit protein uS2 (252 aa).

The protein belongs to the universal ribosomal protein uS2 family.

This chain is Small ribosomal subunit protein uS2, found in Alcanivorax borkumensis (strain ATCC 700651 / DSM 11573 / NCIMB 13689 / SK2).